The sequence spans 63 residues: Potassium channel toxin Sp4 (63 aa).

A signal peptide spans 1-20 (MNKVHFALFLLVLTVLAVSG). 3 cysteine pairs are disulfide-bonded: cysteine 31-cysteine 53, cysteine 38-cysteine 58, and cysteine 42-cysteine 60.

It belongs to the long chain scorpion toxin family. Class 2 subfamily. Expressed by the venom gland.

The protein resides in the secreted. Its function is as follows. This recombinant toxin selectively inhibits mouse voltage-gated potassium channel Kv1.3/KCNA3 (IC(50)=24.73 nM). The chain is Potassium channel toxin Sp4 from Scorpiops pococki (Scorpion).